The sequence spans 314 residues: Signal peptidase I (314 aa).

The helical transmembrane segment at L5–I25 threads the bilayer. The Cytoplasmic segment spans residues K26–S63. A helical membrane pass occupies residues F64–I84. At P85 to H314 the chain is on the extracellular side. Catalysis depends on residues S88 and K143.

The protein belongs to the peptidase S26 family.

The protein localises to the cell membrane. The enzyme catalyses Cleavage of hydrophobic, N-terminal signal or leader sequences from secreted and periplasmic proteins.. The sequence is that of Signal peptidase I (lepB) from Buchnera aphidicola subsp. Acyrthosiphon pisum (strain APS) (Acyrthosiphon pisum symbiotic bacterium).